Reading from the N-terminus, the 464-residue chain is MKFIDFSAYKVEAKKLLLIALPILLAQIAQNSMGLVDTIMSGRVSSADMAAISVGASIWFPLVLFGHGLLLALPPTISYLNGSGKRDQIAHQVRQGIWIILFSCLPLGILIYYSNLVFDYMQVEDHLKEITIGYLHAMIWGLPAYLLMINFRCLNDGIAKTKPAMVITFLGLGLNIPLNYIFIYGKLGIPAFGAVGCGIATAIVNWFMCILMIAYCKNARNQRDLKVFAKILEKPNFTTLKKLLNLGFPIAVALFCEVALFALTALLLSPLGTDIVASHQIALNTSSFLFMLPMSLGMAATILVGQRLGEGAADKAKQVSYSALIVGLLIAVITATLTVIFRVEIAEIFVKDRDVIAMAGTLLLIAALYQFSDTVQVVAGGALRGYKDTKAILYITLFCYWVVGMPMGYTLARTDLLMPALGAEGFWIGFVVSLTIAATLLMIRMRKIQAQPDAILFAKLEKLK.

12 helical membrane-spanning segments follow: residues 16 to 36, 51 to 71, 97 to 117, 129 to 149, 164 to 184, 194 to 214, 248 to 268, 285 to 305, 321 to 341, 355 to 375, 391 to 411, and 423 to 443; these read LLLI…MGLV, AISV…GLLL, IWII…SNLV, EITI…LLMI, AMVI…IFIY, AVGC…LMIA, FPIA…ALLL, TSSF…ILVG, YSAL…TVIF, VIAM…SDTV, AILY…GYTL, and AEGF…LLMI.

The protein belongs to the multi antimicrobial extrusion (MATE) (TC 2.A.66.1) family.

The protein resides in the cell inner membrane. Multidrug efflux pump. The chain is Probable multidrug resistance protein NorM (norM) from Pasteurella multocida (strain Pm70).